Consider the following 179-residue polypeptide: CASP-like protein 1F1 (179 aa).

Topologically, residues 1–16 are cytoplasmic; sequence MENVEDKYNSPLKSQK. A helical transmembrane segment spans residues 17-37; sequence LFIGAQICLRIVTIGATLAAT. Over 38-65 the chain is Extracellular; it reads WIMVTDKQSITFGDFVMVAKYNYSSAFK. Residue Asn59 is glycosylated (N-linked (GlcNAc...) asparagine). A helical membrane pass occupies residues 66-86; that stretch reads FFVLANVIACACSVVSLLFLC. At 87-105 the chain is on the cytoplasmic side; it reads ALGRYSSNPGHVFLLFLHD. Residues 106 to 126 traverse the membrane as a helical segment; that stretch reads LLMMSLVLAGCSAATAIGFLG. At 127 to 150 the chain is on the extracellular side; sequence KYGNTKSGWMPICDQFGQFCNRGT. A helical transmembrane segment spans residues 151–171; it reads ISMMLSYLSMVCLLILTVTSA. At 172–179 the chain is on the cytoplasmic side; that stretch reads NKSRQIHV.

Belongs to the Casparian strip membrane proteins (CASP) family. Homodimer and heterodimers.

It localises to the cell membrane. In Ricinus communis (Castor bean), this protein is CASP-like protein 1F1.